The sequence spans 205 residues: Glycerol-3-phosphate acyltransferase (205 aa).

A run of 5 helical transmembrane segments spans residues 4 to 24 (IAPGLVLLAYLCGSISSAILV), 80 to 100 (PFWLGLVAIAACVGHIWPVFF), 107 to 127 (GVATAFGAIAPIGLDLTGVMA), 130 to 150 (WLLTILLSGYSSLGAIVSALI), and 155 to 175 (VWWFKPQYTFPVSMLSCLILL).

It belongs to the PlsY family. In terms of assembly, probably interacts with PlsX.

It localises to the cell inner membrane. The enzyme catalyses an acyl phosphate + sn-glycerol 3-phosphate = a 1-acyl-sn-glycero-3-phosphate + phosphate. It functions in the pathway lipid metabolism; phospholipid metabolism. In terms of biological role, catalyzes the transfer of an acyl group from acyl-phosphate (acyl-PO(4)) to glycerol-3-phosphate (G3P) to form lysophosphatidic acid (LPA). This enzyme utilizes acyl-phosphate as fatty acyl donor, but not acyl-CoA or acyl-ACP. This chain is Glycerol-3-phosphate acyltransferase, found in Klebsiella pneumoniae subsp. pneumoniae (strain ATCC 700721 / MGH 78578).